The chain runs to 498 residues: NAC domain-containing protein 75 (498 aa).

Residues 48-215 (LPAGVKFDPT…ELVVSKIFYQ (168 aa)) enclose the NAC domain. Residues 166 to 221 (KGCKKILVLYTNFGKNRKPEKTNWVMHQYHLGTHEEEKEGELVVSKIFYQTQPRQC) mediate DNA binding. Disordered regions lie at residues 225–278 (SSTS…PNRS), 338–374 (VMAEQHRHRHQPSSSTSHHMAHDHHHHHHQQQQQRHH), 423–443 (QQQLRQEGEEEHNDGKMGGRS), and 457–498 (STTH…DHHG). The span at 233-248 (IGGGGGEASSGGGGGE) shows a compositional bias: gly residues. The segment covering 256–266 (GTTSGGSCSSS) has biased composition (low complexity). The span at 356-374 (HMAHDHHHHHHQQQQQRHH) shows a compositional bias: basic residues. Polar residues predominate over residues 466 to 475 (GSSSMGNQQE).

Expressed in the vascular cylinder of roots. Expressed in the differentiation zone of the root stele.

It is found in the nucleus. Transcription activator involved in xylem formation. Promotes the expression of the secondary wall-associated transcription factor MYB46. Functions upstream of NAC030/VND7, a master switch of xylem vessel differentiation. Acts as a upstream regulator of NAC101/VND6 and LBD30/ASL19. The sequence is that of NAC domain-containing protein 75 from Arabidopsis thaliana (Mouse-ear cress).